Consider the following 74-residue polypeptide: Conotoxin AbVIH (74 aa).

A signal peptide spans 1–17 (VLIIAVLFLTACQLTTA). The propeptide occupies 18-40 (ETSSRGKQKHRALRSTDKDSRMT). Positions 19–40 (TSSRGKQKHRALRSTDKDSRMT) are disordered. Cystine bridges form between C43–C57, C50–C61, and C56–C68.

It belongs to the conotoxin O1 superfamily. Expressed by the venom duct.

The protein localises to the secreted. The chain is Conotoxin AbVIH from Conus abbreviatus (Abbreviated cone).